The following is a 205-amino-acid chain: Microtubule-associated protein Jupiter (205 aa).

Serine 30 bears the Phosphoserine mark. Threonine 41, threonine 98, and threonine 102 each carry phosphothreonine. Residues 124–135 show a composition bias toward polar residues; it reads LISNSKGNYNGK. Residues 124-205 form a disordered region; it reads LISNSKGNYN…PPGGYSSGLW (82 aa). Low complexity predominate over residues 136 to 149; sequence SGSVSSASSSVSSS. Serine 138 and serine 149 each carry phosphoserine. The span at 181–191 shows a compositional bias: polar residues; the sequence is PANNGSSQVIN.

This sequence belongs to the MAP Jupiter family.

It is found in the nucleus. The protein resides in the cytoplasm. The protein localises to the cytoskeleton. Its subcellular location is the spindle. Binds to all microtubule populations. In Drosophila virilis (Fruit fly), this protein is Microtubule-associated protein Jupiter.